We begin with the raw amino-acid sequence, 440 residues long: Ribosomal protein uS12 methylthiotransferase RimO (440 aa).

Residues 5–116 (PTIAISHLGC…IVNVIERAEQ (112 aa)) form the MTTase N-terminal domain. Positions 14, 50, 79, 154, 158, and 161 each coordinate [4Fe-4S] cluster. Residues 140-370 (TTTEGVAYLR…ALQQPISWRK (231 aa)) form the Radical SAM core domain. Residues 372–438 (QQEVGKTVEV…EYDLFGQVVS (67 aa)) form the TRAM domain.

Belongs to the methylthiotransferase family. RimO subfamily. [4Fe-4S] cluster serves as cofactor.

The protein resides in the cytoplasm. It catalyses the reaction L-aspartate(89)-[ribosomal protein uS12]-hydrogen + (sulfur carrier)-SH + AH2 + 2 S-adenosyl-L-methionine = 3-methylsulfanyl-L-aspartate(89)-[ribosomal protein uS12]-hydrogen + (sulfur carrier)-H + 5'-deoxyadenosine + L-methionine + A + S-adenosyl-L-homocysteine + 2 H(+). Functionally, catalyzes the methylthiolation of an aspartic acid residue of ribosomal protein uS12. In Trichormus variabilis (strain ATCC 29413 / PCC 7937) (Anabaena variabilis), this protein is Ribosomal protein uS12 methylthiotransferase RimO.